Reading from the N-terminus, the 513-residue chain is OTU domain-containing protein 5-A (513 aa).

Disordered stretches follow at residues 1 to 75 (MTIL…GGAG) and 99 to 136 (GPGH…DEYE). The OTU domain occupies 166–289 (FIIKQMKEDG…NIHYNSVVNP (124 aa)). The segment at 171–177 (MKEDGAC) is cys-loop. The active site involves Asp-174. Cys-177 (nucleophile) is an active-site residue. The segment at 226 to 236 (KRKNNCHGNHI) is variable-loop. The his-loop stretch occupies residues 277 to 282 (YHRNIH). His-282 is an active-site residue. Residues 387 to 446 (LEEWSGRSPRQRSTAGSPEHPDLHAELCMKPPSPGAPLILGKPPSPCAPGPSNQMSTGAD) are disordered.

This sequence belongs to the peptidase C85 family.

It carries out the reaction Thiol-dependent hydrolysis of ester, thioester, amide, peptide and isopeptide bonds formed by the C-terminal Gly of ubiquitin (a 76-residue protein attached to proteins as an intracellular targeting signal).. Deubiquitinating enzyme that may function as negative regulator of the innate immune system. Has peptidase activity towards 'Lys-48'- and 'Lys-63'-linked polyubiquitin chains. Can also cleave 'Lys-11'-linked ubiquitin chains (in vitro). The chain is OTU domain-containing protein 5-A (otud5-a) from Xenopus laevis (African clawed frog).